The primary structure comprises 305 residues: Dermonecrotic toxin LiSicTox-alphaIA2aiii (305 aa).

The N-terminal stretch at 1-17 (LPYIALILVCWSVLSQA) is a signal peptide. Residues 18 to 25 (AQTDVEER) constitute a propeptide that is removed on maturation. The active site involves His37. 2 residues coordinate Mg(2+): Glu57 and Asp59. The active-site Nucleophile is the His73. 2 cysteine pairs are disulfide-bonded: Cys77/Cys83 and Cys79/Cys222. Asp117 contributes to the Mg(2+) binding site. Asn282 is a glycosylation site (N-linked (GlcNAc...) asparagine).

It belongs to the arthropod phospholipase D family. Class II subfamily. It depends on Mg(2+) as a cofactor. In terms of tissue distribution, expressed by the venom gland.

The protein resides in the secreted. It carries out the reaction an N-(acyl)-sphingosylphosphocholine = an N-(acyl)-sphingosyl-1,3-cyclic phosphate + choline. The enzyme catalyses an N-(acyl)-sphingosylphosphoethanolamine = an N-(acyl)-sphingosyl-1,3-cyclic phosphate + ethanolamine. The catalysed reaction is a 1-acyl-sn-glycero-3-phosphocholine = a 1-acyl-sn-glycero-2,3-cyclic phosphate + choline. It catalyses the reaction a 1-acyl-sn-glycero-3-phosphoethanolamine = a 1-acyl-sn-glycero-2,3-cyclic phosphate + ethanolamine. In terms of biological role, dermonecrotic toxins cleave the phosphodiester linkage between the phosphate and headgroup of certain phospholipids (sphingolipid and lysolipid substrates), forming an alcohol (often choline) and a cyclic phosphate. This toxin acts on sphingomyelin (SM). It may also act on ceramide phosphoethanolamine (CPE), lysophosphatidylcholine (LPC) and lysophosphatidylethanolamine (LPE), but not on lysophosphatidylserine (LPS), and lysophosphatidylglycerol (LPG). It acts by transphosphatidylation, releasing exclusively cyclic phosphate products as second products. Induces dermonecrosis, hemolysis, increased vascular permeability, edema, inflammatory response, and platelet aggregation. The protein is Dermonecrotic toxin LiSicTox-alphaIA2aiii of Loxosceles intermedia (Brown spider).